The chain runs to 82 residues: CLAVATA3/ESR (CLE)-related protein 53 (82 aa).

The N-terminal stretch at 1–26 (MATSTNSREFLIFICVLTLLVVRSEA) is a signal peptide. Hydroxyproline is present on residues P74 and P77. The O-linked (Ara...) hydroxyproline glycan is linked to P77.

This sequence belongs to the CLV3/ESR signal peptide family. The O-glycosylation (arabinosylation) of the hydroxyproline Pro-77 enhances binding affinity of the CLE53p peptide for its receptor. As to expression, expressed in root vasculature.

It localises to the secreted. Its subcellular location is the extracellular space. Signaling peptide involved in the regulation of root colonization by arbuscular mycorrhizal (AM) fungi. Moves from root to shoot to function with the receptor kinase SUNN, in a signaling pathway that repress strigolactone biosynthetic genes and strigolactone content in the roots, and consequently reduces the promotion of further colonization by AM fungi. This is CLAVATA3/ESR (CLE)-related protein 53 from Medicago truncatula (Barrel medic).